Reading from the N-terminus, the 442-residue chain is NAD kinase 2, mitochondrial (442 aa).

The N-terminal 62 residues, 1 to 62, are a transit peptide targeting the mitochondrion; it reads MTCYRGFLLG…RELAGCGSRA (62 aa). Residues 24 to 36 show a composition bias toward low complexity; the sequence is RGPGAGGPAARPR. The interval 24–60 is disordered; it reads RGPGAGGPAARPRLGGDGGGRRHLGQGQPRELAGCGS. Residue lysine 76 is modified to N6-acetyllysine; alternate. Position 76 is an N6-succinyllysine; alternate (lysine 76). Serine 188 bears the Phosphoserine mark. An N6-succinyllysine modification is found at lysine 302. Lysine 317 bears the N6-acetyllysine; alternate mark. Lysine 317 carries the post-translational modification N6-succinyllysine; alternate. Serine 367 carries the post-translational modification Phosphoserine. Lysine 397 is modified (N6-acetyllysine).

Belongs to the NAD kinase family. In terms of assembly, homodimer. As to expression, widely expressed.

Its subcellular location is the mitochondrion. The enzyme catalyses NAD(+) + ATP = ADP + NADP(+) + H(+). Its activity is regulated as follows. Inhibited by NADH, NADPH and NADP(+). In terms of biological role, mitochondrial NAD(+) kinase that phosphorylates NAD(+) to yield NADP(+). Can use both ATP or inorganic polyphosphate as the phosphoryl donor. Also has weak NADH kinase activity in vitro; however NADH kinase activity is much weaker than the NAD(+) kinase activity and may not be relevant in vivo. This chain is NAD kinase 2, mitochondrial (NADK2), found in Homo sapiens (Human).